The chain runs to 485 residues: E3 ubiquitin-protein ligase RNF8 (485 aa).

An FHA domain is found at 38-92; the sequence is VTVGRGFGVTYQLVSKICPLMISRNHCVLKQNPEGQWTIMDNKSLNGVWLNRARL. Residues 68 to 72 form a required for interaction with PIWIL1 region; sequence QNPEG. Phosphoserine is present on S157. The segment at 181-220 is disordered; that stretch reads CESGQPVKSQGKGEVASTPSDNLDPKLTALEPSKTTGAPI. An RING-type zinc finger spans residues 403–441; sequence CIICSEYFIEAVTLNCAHSFCSYCINEWMKRKIECPICR.

This sequence belongs to the RNF8 family. In terms of assembly, homodimer. Forms a E2-E3 ubiquitin ligase complex composed of the RNF8 homodimer and a E2 heterodimer of UBE2N and UBE2V2. Interacts with class III E2s, including UBE2E1, UBE2E2, and UBE2E3 and with UBE2N. Interacts with RXRA. Interacts (via FHA domain) with ATM-phosphorylated MDC1. Interacts (via FHA domain) with 'Thr-4827' phosphorylated HERC2 (via C-terminus). Interacts with PIWIL1; leading to sequester RNF8 in the cytoplasm. Interacts with WRAP53/TCAB1. (Microbial infection) Interacts (via FHA domain) with phosphorylated human herpesvirus 1 ICP0 protein; leading to RNF8 degradation by the proteasome. Post-translationally, autoubiquitinated through 'Lys-48' and 'Lys-63' of ubiquitin. 'Lys-63' polyubiquitination is mediated by UBE2N. 'Lys-29'-type polyubiquitination is also observed, but it doesn't require its own functional RING-type zinc finger. In terms of tissue distribution, ubiquitous. In fetal tissues, highest expression in brain, thymus and liver. In adult tissues, highest levels in brain and testis, lowest levels in peripheral blood cells.

The protein localises to the nucleus. It localises to the cytoplasm. It is found in the midbody. Its subcellular location is the chromosome. The protein resides in the telomere. It carries out the reaction S-ubiquitinyl-[E2 ubiquitin-conjugating enzyme]-L-cysteine + [acceptor protein]-L-lysine = [E2 ubiquitin-conjugating enzyme]-L-cysteine + N(6)-ubiquitinyl-[acceptor protein]-L-lysine.. Its pathway is protein modification; protein ubiquitination. E3 ubiquitin-protein ligase that plays a key role in DNA damage signaling via 2 distinct roles: by mediating the 'Lys-63'-linked ubiquitination of histones H2A and H2AX and promoting the recruitment of DNA repair proteins at double-strand breaks (DSBs) sites, and by catalyzing 'Lys-48'-linked ubiquitination to remove target proteins from DNA damage sites. Following DNA DSBs, it is recruited to the sites of damage by ATM-phosphorylated MDC1 and catalyzes the 'Lys-63'-linked ubiquitination of histones H2A and H2AX, thereby promoting the formation of TP53BP1 and BRCA1 ionizing radiation-induced foci (IRIF). Also controls the recruitment of UIMC1-BRCC3 (RAP80-BRCC36) and PAXIP1/PTIP to DNA damage sites. Promotes the recruitment of NBN to DNA damage sites by catalyzing 'Lys-6'-linked ubiquitination of NBN. Also recruited at DNA interstrand cross-links (ICLs) sites and catalyzes 'Lys-63'-linked ubiquitination of histones H2A and H2AX, leading to recruitment of FAAP20/C1orf86 and Fanconi anemia (FA) complex, followed by interstrand cross-link repair. H2A ubiquitination also mediates the ATM-dependent transcriptional silencing at regions flanking DSBs in cis, a mechanism to avoid collision between transcription and repair intermediates. Promotes the formation of 'Lys-63'-linked polyubiquitin chains via interactions with the specific ubiquitin-conjugating UBE2N/UBC13 and ubiquitinates non-histone substrates such as PCNA. Substrates that are polyubiquitinated at 'Lys-63' are usually not targeted for degradation. Also catalyzes the formation of 'Lys-48'-linked polyubiquitin chains via interaction with the ubiquitin-conjugating UBE2L6/UBCH8, leading to degradation of substrate proteins such as CHEK2, JMJD2A/KDM4A and KU80/XRCC5: it is still unclear how the preference toward 'Lys-48'- versus 'Lys-63'-linked ubiquitination is regulated but it could be due to RNF8 ability to interact with specific E2 specific ligases. For instance, interaction with phosphorylated HERC2 promotes the association between RNF8 and UBE2N/UBC13 and favors the specific formation of 'Lys-63'-linked ubiquitin chains. Promotes non-homologous end joining (NHEJ) by promoting the 'Lys-48'-linked ubiquitination and degradation the of KU80/XRCC5. Following DNA damage, mediates the ubiquitination and degradation of JMJD2A/KDM4A in collaboration with RNF168, leading to unmask H4K20me2 mark and promote the recruitment of TP53BP1 at DNA damage sites. Following DNA damage, mediates the ubiquitination and degradation of POLD4/p12, a subunit of DNA polymerase delta. In the absence of POLD4, DNA polymerase delta complex exhibits higher proofreading activity. In addition to its function in damage signaling, also plays a role in higher-order chromatin structure by mediating extensive chromatin decondensation. Involved in the activation of ATM by promoting histone H2B ubiquitination, which indirectly triggers histone H4 'Lys-16' acetylation (H4K16ac), establishing a chromatin environment that promotes efficient activation of ATM kinase. Required in the testis, where it plays a role in the replacement of histones during spermatogenesis. At uncapped telomeres, promotes the joining of deprotected chromosome ends by inducing H2A ubiquitination and TP53BP1 recruitment, suggesting that it may enhance cancer development by aggravating telomere-induced genome instability in case of telomeric crisis. Promotes the assembly of RAD51 at DNA DSBs in the absence of BRCA1 and TP53BP1 Also involved in class switch recombination in immune system, via its role in regulation of DSBs repair. May be required for proper exit from mitosis after spindle checkpoint activation and may regulate cytokinesis. May play a role in the regulation of RXRA-mediated transcriptional activity. Not involved in RXRA ubiquitination by UBE2E2. In Homo sapiens (Human), this protein is E3 ubiquitin-protein ligase RNF8.